Here is a 168-residue protein sequence, read N- to C-terminus: 2-C-methyl-D-erythritol 2,4-cyclodiphosphate synthase (168 aa).

A divalent metal cation-binding residues include aspartate 13 and histidine 15. 4-CDP-2-C-methyl-D-erythritol 2-phosphate contacts are provided by residues 13–15 and 39–40; these read DVH and HS. Histidine 47 provides a ligand contact to a divalent metal cation. Residues 61 to 63, 66 to 70, phenylalanine 144, and arginine 147 contribute to the 4-CDP-2-C-methyl-D-erythritol 2-phosphate site; these read DIG and FPDTD.

The protein belongs to the IspF family. In terms of assembly, homotrimer. A divalent metal cation is required as a cofactor.

It carries out the reaction 4-CDP-2-C-methyl-D-erythritol 2-phosphate = 2-C-methyl-D-erythritol 2,4-cyclic diphosphate + CMP. It functions in the pathway isoprenoid biosynthesis; isopentenyl diphosphate biosynthesis via DXP pathway; isopentenyl diphosphate from 1-deoxy-D-xylulose 5-phosphate: step 4/6. Involved in the biosynthesis of isopentenyl diphosphate (IPP) and dimethylallyl diphosphate (DMAPP), two major building blocks of isoprenoid compounds. Catalyzes the conversion of 4-diphosphocytidyl-2-C-methyl-D-erythritol 2-phosphate (CDP-ME2P) to 2-C-methyl-D-erythritol 2,4-cyclodiphosphate (ME-CPP) with a corresponding release of cytidine 5-monophosphate (CMP). The sequence is that of 2-C-methyl-D-erythritol 2,4-cyclodiphosphate synthase from Ralstonia nicotianae (strain ATCC BAA-1114 / GMI1000) (Ralstonia solanacearum).